A 622-amino-acid polypeptide reads, in one-letter code: MLFYSFVWSVLAASVALAKTHKLNYTASWVTANPDGLHEKRMIGFNGEWPLPDIHVEKGDRVELYLTNGFQDNTATSLHFHGLFQNTSLGNQLQMDGPSMVTQCPIVPGQTYLYNFTVPEQVGTFWYHAHMGAQYGDGMRGAFIIHDPEEPFEYDHERVITLSDHYHENYKTVTKEFLSRYNPTGAEPIPQNILFNNTMNVTLDFTPGETYLFRFLNVGLFVSQYIILEDHEMSIVEVDGVYVKPNFTDSIYLSAGQRMSVLIKAKDKMPTRNYAMMQIMDETMLDVVPPELQLNQTIQMRYGHSLPEARALNIEDCDLDRATNDFYLEPLIERDLLAHYDHQIVMDVRMVNLGDGVKYAFFNNITYVTPKVPTLTTLLTSGKLASDPRIYGDNINAQLLKHNDIIEVVLNNYDSGRHPFHLHGHNFQIVQKSPGFHVDEAYDESEQDEMTVPYNESAPLQPFPERPMVRDTVVLEPSGHVVLRFRADNPGVWYFHCHVDWHLQQGLASVFIEAPVLLQEREKLNENYLDICKAADIPVVGNAAGHSNDWFDLKGLPRQPEPLPKGFTTEGYLALIISTIIGVWGLYSIAQYGIGEVIPNDEKVYHTLREILAENEIEVSRG.

A signal peptide spans 1–18 (MLFYSFVWSVLAASVALA). The Extracellular portion of the chain corresponds to 19-573 (KTHKLNYTAS…PKGFTTEGYL (555 aa)). The N-linked (GlcNAc...) asparagine glycan is linked to Asn-24. 2 Plastocyanin-like domains span residues 43-146 (IGFN…FIIH) and 192-301 (NILF…IQMR). Cu cation-binding residues include His-79 and His-81. N-linked (GlcNAc...) asparagine glycosylation is found at Asn-86 and Asn-115. Positions 128 and 130 each coordinate Cu cation. 5 N-linked (GlcNAc...) asparagine glycosylation sites follow: Asn-196, Asn-200, Asn-246, Asn-295, and Asn-364. The region spanning 392–514 (GDNINAQLLK…QGLASVFIEA (123 aa)) is the Plastocyanin-like 3 domain. The Cu cation site is built by His-418, His-421, and His-423. A glycan (N-linked (GlcNAc...) asparagine) is linked at Asn-455. Residues His-496, Cys-497, His-498, and His-502 each contribute to the Cu cation site. A helical transmembrane segment spans residues 574–594 (ALIISTIIGVWGLYSIAQYGI). Residues 595 to 622 (GEVIPNDEKVYHTLREILAENEIEVSRG) lie on the Cytoplasmic side of the membrane.

This sequence belongs to the multicopper oxidase family. Interacts with FTH1. It depends on Cu cation as a cofactor.

The protein localises to the cell membrane. Iron transport multicopper oxidase, which is required for Fe(2+) high affinity uptake. May be required to oxidize Fe(2+) and release it from the transporter. Essential component of copper-dependent iron transport. This Saccharomyces cerevisiae (strain ATCC 204508 / S288c) (Baker's yeast) protein is Iron transport multicopper oxidase FET5 (FET5).